Here is a 107-residue protein sequence, read N- to C-terminus: Integration host factor subunit beta (107 aa).

A disordered region spans residues phenylalanine 76–arginine 107. Basic and acidic residues predominate over residues proline 82 to aspartate 101.

The protein belongs to the bacterial histone-like protein family. Heterodimer of an alpha and a beta chain.

Functionally, this protein is one of the two subunits of integration host factor, a specific DNA-binding protein that functions in genetic recombination as well as in transcriptional and translational control. This chain is Integration host factor subunit beta, found in Burkholderia cenocepacia (strain ATCC BAA-245 / DSM 16553 / LMG 16656 / NCTC 13227 / J2315 / CF5610) (Burkholderia cepacia (strain J2315)).